Reading from the N-terminus, the 195-residue chain is Glycerol-3-phosphate acyltransferase (195 aa).

The next 5 helical transmembrane spans lie at 3 to 23 (IHAV…GLIL), 53 to 73 (AVMT…LAKI), 80 to 100 (FAFI…WLLF), 115 to 135 (LIEY…FAIF), and 147 to 167 (IFVA…VFIA).

Belongs to the PlsY family. As to quaternary structure, probably interacts with PlsX.

It localises to the cell inner membrane. It carries out the reaction an acyl phosphate + sn-glycerol 3-phosphate = a 1-acyl-sn-glycero-3-phosphate + phosphate. It participates in lipid metabolism; phospholipid metabolism. In terms of biological role, catalyzes the transfer of an acyl group from acyl-phosphate (acyl-PO(4)) to glycerol-3-phosphate (G3P) to form lysophosphatidic acid (LPA). This enzyme utilizes acyl-phosphate as fatty acyl donor, but not acyl-CoA or acyl-ACP. This is Glycerol-3-phosphate acyltransferase from Ehrlichia chaffeensis (strain ATCC CRL-10679 / Arkansas).